The primary structure comprises 250 residues: tRNA (guanine-N(7)-)-methyltransferase (250 aa).

Glu-79, Glu-104, Asp-131, and Asp-154 together coordinate S-adenosyl-L-methionine. Asp-154 is an active-site residue. Substrate-binding positions include Lys-158, Asp-190, and 228-231; that span reads TKFE.

It belongs to the class I-like SAM-binding methyltransferase superfamily. TrmB family.

The enzyme catalyses guanosine(46) in tRNA + S-adenosyl-L-methionine = N(7)-methylguanosine(46) in tRNA + S-adenosyl-L-homocysteine. It participates in tRNA modification; N(7)-methylguanine-tRNA biosynthesis. Its function is as follows. Catalyzes the formation of N(7)-methylguanine at position 46 (m7G46) in tRNA. This chain is tRNA (guanine-N(7)-)-methyltransferase, found in Actinobacillus pleuropneumoniae serotype 5b (strain L20).